A 63-amino-acid polypeptide reads, in one-letter code: Sarcotoxin-1A (63 aa).

Positions 1–23 are cleaved as a signal peptide; that stretch reads MNFQNIFIFVALILAVFAGQSQA. Residue R62 is modified to Arginine amide.

The protein belongs to the cecropin family.

The protein resides in the secreted. Functionally, sarcotoxins, which are potent bactericidal proteins, are produced in response to injury. They are cytotoxic to both Gram-positive and Gram-negative bacteria. The chain is Sarcotoxin-1A from Sarcophaga peregrina (Flesh fly).